A 462-amino-acid polypeptide reads, in one-letter code: F-box/LRR-repeat protein At5g38396 (462 aa).

The 47-residue stretch at 1–47 (MDLLRNIPDELICHILSFLTTKEAALTSVLSKRWRNLLAFVSNLHID) folds into the F-box domain. LRR repeat units lie at residues 118–146 (SIDL…KLHR), 148–175 (CIGQ…ELDY), 197–222 (VDAF…TMSS), 302–333 (CLDL…SIKS), and 334–359 (AENR…VLEG).

This chain is F-box/LRR-repeat protein At5g38396, found in Arabidopsis thaliana (Mouse-ear cress).